The following is a 286-amino-acid chain: Uridylate cyclase (286 aa).

One can recognise a Guanylate cyclase domain in the interval 90-223 (TAIFVDIRKS…DAVTKAANMS (134 aa)). Phe-93 serves as a coordination point for a ribonucleoside 5'-triphosphate. Positions 95, 96, and 140 each coordinate Mn(2+).

Belongs to the adenylyl cyclase class-4/guanylyl cyclase family. Pyrimidine cyclase subfamily. In terms of assembly, homodimer. The cofactor is Mn(2+).

It is found in the cytoplasm. The catalysed reaction is UTP = 3',5'-cyclic UMP + diphosphate. Functionally, pycsar (pyrimidine cyclase system for antiphage resistance) provides immunity against bacteriophage. The pyrimidine cyclase (PycC) synthesizes cyclic nucleotides in response to infection; these serve as specific second messenger signals. The signals activate the adjacent effector, leading to bacterial cell death and abortive phage infection. A clade C Pycsar system. The pyrimidine cyclase gene of a two-gene Pycsar system, weakly generates cyclic UMP (cUMP) from UTP, has little to no activity on ATP, CTP or GTP. Expression of this and adjacent effector TpPycTM (AC A0A1T4LJG1) probably confers resistance to bacteriophage. The genes are probably only expressed in response to bacteriophage infection. The sequence is that of Uridylate cyclase from Treponema porcinum.